We begin with the raw amino-acid sequence, 270 residues long: Hemin import ATP-binding protein HmuV (270 aa).

The ABC transporter domain maps to 2-238; it reads LTVENIEVTL…VTLSQAYGCT (237 aa). ATP is bound at residue 34 to 41; the sequence is GHNGSGKT.

This sequence belongs to the ABC transporter superfamily. Heme (hemin) importer (TC 3.A.1.14.5) family. As to quaternary structure, the complex is composed of two ATP-binding proteins (HmuV), two transmembrane proteins (HmuU) and a solute-binding protein (HmuT).

The protein localises to the cell inner membrane. Functionally, part of the ABC transporter complex HmuTUV involved in hemin import. Responsible for energy coupling to the transport system. This chain is Hemin import ATP-binding protein HmuV, found in Jannaschia sp. (strain CCS1).